A 163-amino-acid polypeptide reads, in one-letter code: Retinoic acid receptor responder protein 2 (163 aa).

The signal sequence occupies residues 1-20; that stretch reads MRRLLIPLALWLGAVGVGVA. Intrachain disulfides connect Cys77–Cys87, Cys98–Cys117, and Cys101–Cys135. Positions 158-163 are excised as a propeptide; it reads KALPRS.

Secreted in an inactive precursor form, prochemerin, which is proteolytically processed by a variety of extracellular proteases to generate forms with differing levels of bioactivity. For example, the removal of six amino acids results in chemerin-157, which exhibits the highest activity, while removal of seven amino acids results in chemerin-156 which has slightly less activity. Some proteases are able to cleave at more than one site and chemerin forms may be sequentially processed by different enzymes to modulate activity levels. The coordinated expression and activity of chemerin-modifying enzymes is essential for regulating its bioactivation, inactivation and, consequently, biological function. Cathepsin G cleaves seven C-terminal amino acids from prochemerin (chemerin-156), elastase is able to cleave six (chemerin-157), eight (chemerin-155) or eleven (chemerin-152), plasmin cleaves five amino acids (chemerin-158), and tryptase cleaves five (chemerin-158) or eight (chemerin-155). Multiple cleavages might be required to fully activate chemerin, with an initial tryptase cleavage resulting in chemerin with low activity (chemerin-158), and a second cleavage by carboxypeptidase N or B producing highly active chemerin (chemerin-157). Expressed at the highest levels in placenta, liver, and white adipose tissue (WAT), and to a lesser extent in many other tissues such as lung, brown adipose tissue, heart, ovary, kidney, skeletal muscle and pancreas. Within WAT, expression is enriched in adipocytes as compared to the stromal vascular fraction. Expression and secretion increases dramatically with adipogenesis. Highly expressed in skin (basal and suprabasal layers of the epidermis, hair follicles and endothelial cells). Expression is elevated in numerous metabolic and inflammatory diseases including psoriasis, obesity, type 2 diabetes, metabolic syndrome and cardiovascular disease.

Its subcellular location is the secreted. Its function is as follows. Adipocyte-secreted protein (adipokine) that regulates adipogenesis, metabolism and inflammation through activation of the chemokine-like receptor 1 (CMKLR1). Also acts as a ligand for CMKLR2. Can also bind to C-C chemokine receptor-like 2 (CCRL2), but with a lower affinity than it does to CMKLR1 or CMKLR2. Positively regulates adipocyte differentiation, modulates the expression of adipocyte genes involved in lipid and glucose metabolism and might play a role in angiogenesis, a process essential for the expansion of white adipose tissue. Also acts as a pro-inflammatory adipokine, causing an increase in secretion of pro-inflammatory and prodiabetic adipokines, which further impair adipose tissue metabolic function and have negative systemic effects including impaired insulin sensitivity, altered glucose and lipid metabolism, and a decrease in vascular function in other tissues. Can have both pro- and anti-inflammatory properties depending on the modality of enzymatic cleavage by different classes of proteases. Acts as a chemotactic factor for leukocyte populations expressing CMKLR1, particularly immature plasmacytoid dendritic cells, but also immature myeloid DCs, macrophages and natural killer cells. Exerts an anti-inflammatory role by preventing TNF/TNFA-induced VCAM1 expression and monocytes adhesion in vascular endothelial cells. The effect is mediated via inhibiting activation of NF-kappa-B and CRK/p38 through stimulation of AKT1/NOS3 signaling and nitric oxide production. Its dual role in inflammation and metabolism might provide a link between chronic inflammation and obesity, as well as obesity-related disorders such as type 2 diabetes and cardiovascular disease. Exhibits an antimicrobial function in the skin. The chain is Retinoic acid receptor responder protein 2 (RARRES2) from Homo sapiens (Human).